The chain runs to 553 residues: Putative transport protein YidE (553 aa).

Transmembrane regions (helical) follow at residues 4–24, 28–48, 65–85, 95–115, and 158–178; these read IALT…IGNV, GVGL…HFVS, FGLI…FFAS, LFAV…HKLF, and MSYA…MWML. RCK C-terminal domains are found at residues 191–276 and 279–361; these read QQHE…VIGQ and DTSL…VLGN. Helical transmembrane passes span 371-391, 393-413, 439-459, 464-484, 493-513, and 533-553; these read MLPV…PVFV, GFPA…ALIL, IVLF…HTLV, LSWI…VGIL, YLTM…LAFA, and LVMF…WSIG.

The protein belongs to the AAE transporter (TC 2.A.81) family. YidE subfamily.

The protein localises to the cell membrane. This Escherichia coli O6:H1 (strain CFT073 / ATCC 700928 / UPEC) protein is Putative transport protein YidE.